The chain runs to 424 residues: tRNA modification GTPase MnmE (424 aa).

3 residues coordinate (6S)-5-formyl-5,6,7,8-tetrahydrofolate: arginine 20, glutamate 77, and arginine 117. The TrmE-type G domain maps to 212–351 (GVRVVFAGPP…LVRDLRDAAR (140 aa)). Asparagine 222 is a K(+) binding site. GTP-binding positions include 222 to 227 (NAGKST), 241 to 247 (SPIAGTT), and 266 to 269 (DTAG). Serine 226 is a binding site for Mg(2+). Residues serine 241, isoleucine 243, and threonine 246 each contribute to the K(+) site. Position 247 (threonine 247) interacts with Mg(2+). Lysine 424 provides a ligand contact to (6S)-5-formyl-5,6,7,8-tetrahydrofolate.

The protein belongs to the TRAFAC class TrmE-Era-EngA-EngB-Septin-like GTPase superfamily. TrmE GTPase family. Homodimer. Heterotetramer of two MnmE and two MnmG subunits. The cofactor is K(+).

The protein localises to the cytoplasm. Functionally, exhibits a very high intrinsic GTPase hydrolysis rate. Involved in the addition of a carboxymethylaminomethyl (cmnm) group at the wobble position (U34) of certain tRNAs, forming tRNA-cmnm(5)s(2)U34. This Erythrobacter litoralis (strain HTCC2594) protein is tRNA modification GTPase MnmE.